Consider the following 355-residue polypeptide: Beta-porphyranase C (355 aa).

The first 18 residues, 1-18, serve as a signal peptide directing secretion; it reads MIKTLKRIPLVFLIAIMA. Cys-19 carries the N-palmitoyl cysteine lipid modification. Cys-19 carries the S-diacylglycerol cysteine lipid modification. A disordered region spans residues 22–72; the sequence is SGDNGKDKVEEQEQAQEQGEKKGQGEERDKEDGIDGLQPTFLADQDPKPDD. A compositionally biased stretch (basic and acidic residues) spans 39–54; sequence QGEKKGQGEERDKEDG. In terms of domain architecture, GH16 spans 71–355; the sequence is DDKKWIKVEG…WVRVWQLEDL (285 aa). Residues Trp-110, Glu-208, and Glu-213 each coordinate substrate. Catalysis depends on Glu-208, which acts as the Nucleophile. The Proton donor role is filled by Glu-213.

This sequence belongs to the glycosyl hydrolase 16 family.

Its subcellular location is the cell outer membrane. It carries out the reaction Hydrolysis of beta-D-galactopyranose-(1-&gt;4)-alpha-L-galactopyranose-6-sulfate linkages in porphyran.. Cleaves the sulfated polysaccharide porphyran at the (1-&gt;4) linkages between beta-D-galactopyranose and alpha-L-galactopyranose-6-sulfate, forming mostly the disaccharide alpha-L-galactopyranose-6-sulfate-(1-&gt;3)-beta-D-galactose. This Zobellia galactanivorans (strain DSM 12802 / CCUG 47099 / CIP 106680 / NCIMB 13871 / Dsij) protein is Beta-porphyranase C (porC).